Here is a 237-residue protein sequence, read N- to C-terminus: Ankyrin repeat protein 14 (237 aa).

ANK repeat units lie at residues 27-56 (RGET…DVNI) and 60-90 (NGYT…TLDC).

In terms of biological role, may be involved in virus-host protein interaction through the ankyrin repeats. The sequence is that of Ankyrin repeat protein 14 from Vaccinia virus (strain Western Reserve) (VACV).